The chain runs to 250 residues: Putative inactive flavonol synthase 2 (250 aa).

Residues 171–250 (TEYVMRINNY…EQWKVQECVA (80 aa)) form the Fe2OG dioxygenase domain. Fe cation-binding residues include histidine 195 and aspartate 197.

This sequence belongs to the iron/ascorbate-dependent oxidoreductase family.

The protein is Putative inactive flavonol synthase 2 (FLS2) of Arabidopsis thaliana (Mouse-ear cress).